A 244-amino-acid chain; its full sequence is Cell division protein ZapD (244 aa).

The protein belongs to the ZapD family. As to quaternary structure, interacts with FtsZ.

It is found in the cytoplasm. Cell division factor that enhances FtsZ-ring assembly. Directly interacts with FtsZ and promotes bundling of FtsZ protofilaments, with a reduction in FtsZ GTPase activity. This is Cell division protein ZapD from Shewanella baltica (strain OS223).